The following is a 207-amino-acid chain: Cytochrome c biogenesis ATP-binding export protein CcmA (207 aa).

The 203-residue stretch at 2-204 (LEVKNLTAIR…NPKLRKIRLG (203 aa)) folds into the ABC transporter domain. 34–41 (GRNGTGKT) is a binding site for ATP.

Belongs to the ABC transporter superfamily. CcmA exporter (TC 3.A.1.107) family. As to quaternary structure, the complex is composed of two ATP-binding proteins (CcmA) and two transmembrane proteins (CcmB).

It is found in the cell inner membrane. It catalyses the reaction heme b(in) + ATP + H2O = heme b(out) + ADP + phosphate + H(+). Functionally, part of the ABC transporter complex CcmAB involved in the biogenesis of c-type cytochromes; once thought to export heme, this seems not to be the case, but its exact role is uncertain. Responsible for energy coupling to the transport system. This is Cytochrome c biogenesis ATP-binding export protein CcmA from Vibrio cholerae serotype O1 (strain ATCC 39315 / El Tor Inaba N16961).